The chain runs to 128 residues: Thor profilin (128 aa).

The protein belongs to the Asgard profilin family.

The protein localises to the cytoplasm. The protein resides in the cytoskeleton. Has no profilin activity against rabbit actin. The sequence is that of Thor profilin from Thorarchaeota archaeon (strain AB_25).